The sequence spans 270 residues: Putative pyruvate, phosphate dikinase regulatory protein (270 aa).

148-155 is an ADP binding site; sequence GISRTSKT.

Belongs to the pyruvate, phosphate/water dikinase regulatory protein family. PDRP subfamily.

It carries out the reaction N(tele)-phospho-L-histidyl/L-threonyl-[pyruvate, phosphate dikinase] + ADP = N(tele)-phospho-L-histidyl/O-phospho-L-threonyl-[pyruvate, phosphate dikinase] + AMP + H(+). The enzyme catalyses N(tele)-phospho-L-histidyl/O-phospho-L-threonyl-[pyruvate, phosphate dikinase] + phosphate + H(+) = N(tele)-phospho-L-histidyl/L-threonyl-[pyruvate, phosphate dikinase] + diphosphate. Its function is as follows. Bifunctional serine/threonine kinase and phosphorylase involved in the regulation of the pyruvate, phosphate dikinase (PPDK) by catalyzing its phosphorylation/dephosphorylation. This chain is Putative pyruvate, phosphate dikinase regulatory protein, found in Bacillus mycoides (strain KBAB4) (Bacillus weihenstephanensis).